Here is a 911-residue protein sequence, read N- to C-terminus: MEYKDTLLMMKTEFLMRGNLPKREPDMQARWNEMNLYEAVQEKNAGKPTFILHDGPPYANGDIHMGHGLNKVLKDIVVRYKSMNGFRSPYVPGWDTHGLPIETALQKAGVDRKSMSVAEFRELCAKYALEQVDHQREQFKRLGVLGDYDNPYITLQPEFEAAQIRLFGDMANKGYIYKGKKPVYWSPSSESALAEAEIEYQDKRSAAIYVAFQVMDGKNILEPTDHFVIWTTTPWTIPANLGISVSGELTYARIEHEGKGYIVAETLVPEVIEALGWEGATIGRVFDGADFEYIKAKHPLYDRESLVMLGDHVTAEATGVVHTAPGHGEDDFRIGQAYGLDVLCPVDDKGVMTAEAPGFEGLFYEDANKEIGVALEEAGALLKLSFIKHSYPHDWRTKKPVIFRATPQWFASIKDFRAEILDEIKEVQWVPEWGETRLHNMFKDRGDWVISRQRAWGVPLPIFYAEDGTEIVTPETIDHIANLFAAHGSNVWYEREAVDLLPEGFTHPASPNGIFKKETDIMDVWFDSGSSHAGVLATRPELERPADLYLEGSDQYRGWFNSSLSTSVATTGKAPYKAVVSHGFVLDGQGRKMSKSIGNTIAPIQIMQQFGAEILRLWVASVDYQSDVRASMDNFKQVSESYRKIRNTVRFLLGNLDQFDHTTHRVAFKDLPESDRFMRTKLDQLVGKVKAAYDAYDFMAVYQLLHNFCVLDLSSFYLDYTKDILYIEKEDAPARRAVQTVMYDTVVTLLQLMAPVLPHTADEAWEFVPGVETASIFLTDLPEAPEMTEEGLALIAKWNSFLVFRDDVLKALEEARAEKLVGKTLEAKLLLAPNDETKALLATIDHLEQLLQVSQIEFVASAEKSYGTTGITVLKADGEKCERCWTYSTELGQDPAHPTLCPRCTEVVNSL.

The short motif at Pro57–His67 is the 'HIGH' region element. Glu551 serves as a coordination point for L-isoleucyl-5'-AMP. Positions Lys592–Ser596 match the 'KMSKS' region motif. An ATP-binding site is contributed by Lys595. Residues Cys881, Cys884, Cys901, and Cys904 each contribute to the Zn(2+) site.

The protein belongs to the class-I aminoacyl-tRNA synthetase family. IleS type 1 subfamily. In terms of assembly, monomer. Zn(2+) is required as a cofactor.

Its subcellular location is the cytoplasm. The catalysed reaction is tRNA(Ile) + L-isoleucine + ATP = L-isoleucyl-tRNA(Ile) + AMP + diphosphate. In terms of biological role, catalyzes the attachment of isoleucine to tRNA(Ile). As IleRS can inadvertently accommodate and process structurally similar amino acids such as valine, to avoid such errors it has two additional distinct tRNA(Ile)-dependent editing activities. One activity is designated as 'pretransfer' editing and involves the hydrolysis of activated Val-AMP. The other activity is designated 'posttransfer' editing and involves deacylation of mischarged Val-tRNA(Ile). In Exiguobacterium sibiricum (strain DSM 17290 / CCUG 55495 / CIP 109462 / JCM 13490 / 255-15), this protein is Isoleucine--tRNA ligase.